The sequence spans 488 residues: RuvB-like helicase 1 (488 aa).

Residues 1 to 11 (MATANTSSGSM) are compositionally biased toward polar residues. A disordered region spans residues 1–29 (MATANTSSGSMNGVGPVTMDSSTSGASRE). 87–94 (GGPGTGKT) provides a ligand contact to ATP.

Belongs to the RuvB family. May form heterododecamers with RVB2. Component of the SWR1 chromatin remodeling complex, the INO80 chromatin remodeling complex, and of the R2TP complex.

It is found in the nucleus. The catalysed reaction is ATP + H2O = ADP + phosphate + H(+). DNA helicase which participates in several chromatin remodeling complexes, including the SWR1 and the INO80 complexes. The SWR1 complex mediates the ATP-dependent exchange of histone H2A for the H2A variant HZT1 leading to transcriptional regulation of selected genes by chromatin remodeling. The INO80 complex remodels chromatin by shifting nucleosomes and is involved in DNA repair. Also involved in pre-rRNA processing. This is RuvB-like helicase 1 (RVB1) from Mycosarcoma maydis (Corn smut fungus).